The primary structure comprises 356 residues: sn-glycerol-3-phosphate import ATP-binding protein UgpC (356 aa).

Residues 4–235 (LKLQAVTKSW…PASLFVASFI (232 aa)) enclose the ABC transporter domain. 37–44 (GPSGCGKS) lines the ATP pocket.

It belongs to the ABC transporter superfamily. sn-glycerol-3-phosphate importer (TC 3.A.1.1.3) family. In terms of assembly, the complex is composed of two ATP-binding proteins (UgpC), two transmembrane proteins (UgpA and UgpE) and a solute-binding protein (UgpB).

It localises to the cell inner membrane. The catalysed reaction is sn-glycerol 3-phosphate(out) + ATP + H2O = sn-glycerol 3-phosphate(in) + ADP + phosphate + H(+). Functionally, part of the ABC transporter complex UgpBAEC involved in sn-glycerol-3-phosphate (G3P) import. Responsible for energy coupling to the transport system. This Shigella sonnei (strain Ss046) protein is sn-glycerol-3-phosphate import ATP-binding protein UgpC.